The sequence spans 41 residues: Peroxidase 3 (41 aa).

It belongs to the peroxidase family. Classical plant (class III) peroxidase subfamily. Heme b is required as a cofactor. Requires Ca(2+) as cofactor.

Its subcellular location is the secreted. It catalyses the reaction 2 a phenolic donor + H2O2 = 2 a phenolic radical donor + 2 H2O. Its function is as follows. Removal of H(2)O(2), oxidation of toxic reductants, biosynthesis and degradation of lignin, suberization, auxin catabolism, response to environmental stresses such as wounding, pathogen attack and oxidative stress. These functions might be dependent on each isozyme/isoform in each plant tissue. This is Peroxidase 3 from Vitis vinifera (Grape).